The sequence spans 240 residues: tRNA pseudouridine synthase B (240 aa).

Catalysis depends on D54, which acts as the Nucleophile.

This sequence belongs to the pseudouridine synthase TruB family. Type 1 subfamily.

It catalyses the reaction uridine(55) in tRNA = pseudouridine(55) in tRNA. Responsible for synthesis of pseudouridine from uracil-55 in the psi GC loop of transfer RNAs. This is tRNA pseudouridine synthase B from Chlorobaculum tepidum (strain ATCC 49652 / DSM 12025 / NBRC 103806 / TLS) (Chlorobium tepidum).